Reading from the N-terminus, the 224-residue chain is Flagellar L-ring protein (224 aa).

Residues 1–15 (MARYFILAAALLLTA) form the signal peptide. C16 carries N-palmitoyl cysteine lipidation. A lipid anchor (S-diacylglycerol cysteine) is attached at C16.

It belongs to the FlgH family. In terms of assembly, the basal body constitutes a major portion of the flagellar organelle and consists of four rings (L,P,S, and M) mounted on a central rod.

The protein localises to the cell outer membrane. The protein resides in the bacterial flagellum basal body. In terms of biological role, assembles around the rod to form the L-ring and probably protects the motor/basal body from shearing forces during rotation. In Shewanella sp. (strain MR-4), this protein is Flagellar L-ring protein.